A 546-amino-acid chain; its full sequence is Glutamate--tRNA ligase (546 aa).

The short motif at 42 to 52 is the 'HIGH' region element; sequence PSPTGFIHLGN. Residues 293-297 carry the 'KMSKS' region motif; that stretch reads KLSKR. Lys-296 provides a ligand contact to ATP.

Belongs to the class-I aminoacyl-tRNA synthetase family. Glutamate--tRNA ligase type 1 subfamily. In terms of assembly, monomer.

Its subcellular location is the cytoplasm. It catalyses the reaction tRNA(Glu) + L-glutamate + ATP = L-glutamyl-tRNA(Glu) + AMP + diphosphate. Its function is as follows. Catalyzes the attachment of glutamate to tRNA(Glu) in a two-step reaction: glutamate is first activated by ATP to form Glu-AMP and then transferred to the acceptor end of tRNA(Glu). The protein is Glutamate--tRNA ligase of Acetivibrio thermocellus (strain ATCC 27405 / DSM 1237 / JCM 9322 / NBRC 103400 / NCIMB 10682 / NRRL B-4536 / VPI 7372) (Clostridium thermocellum).